The chain runs to 662 residues: Histidine decarboxylase (662 aa).

The substrate site is built by Tyr88 and His201. Lys312 bears the N6-(pyridoxal phosphate)lysine mark. A disordered region spans residues 489-518; it reads QPSPRAKNVIPPPPGTRGLSLESVSEGGDD.

It belongs to the group II decarboxylase family. In terms of assembly, homodimer. Pyridoxal 5'-phosphate is required as a cofactor.

The catalysed reaction is L-histidine + H(+) = histamine + CO2. It functions in the pathway amine and polyamine biosynthesis; histamine biosynthesis; histamine from L-histidine: step 1/1. In terms of biological role, catalyzes the biosynthesis of histamine from histidine. The chain is Histidine decarboxylase (Hdc) from Mus musculus (Mouse).